We begin with the raw amino-acid sequence, 1091 residues long: Voltage-dependent calcium channel subunit alpha-2/delta-1 (1091 aa).

Residues 1–24 form the signal peptide; it reads MAAGCLLALTLTLFQSWLIGPSSE. The Extracellular portion of the chain corresponds to 25 to 1061; that stretch reads EPFPSPVTIK…VLEDYTDCGG (1037 aa). Asn-92 carries an N-linked (GlcNAc...) asparagine glycan. Ser-119 bears the Phosphoserine mark. Residues Asn-136 and Asn-184 are each glycosylated (N-linked (GlcNAc...) asparagine). The VWFA domain maps to 252 to 429; that stretch reads DMLILVDVSG…INTQEYLDVL (178 aa). Positions 258, 260, and 262 each coordinate a divalent metal cation. Residues 258–262 carry the MIDAS-like motif motif; the sequence is DVSGS. N-linked (GlcNAc...) asparagine glycans are attached at residues Asn-323 and Asn-347. Cys-403 and Cys-1047 form a disulfide bridge. One can recognise a Cache domain in the interval 445-536; sequence WTNVYLDALE…QPKNPKSQEP (92 aa). N-linked (GlcNAc...) asparagine glycosylation is found at Asn-593, Asn-769, Asn-876, and Asn-973. Residues 1062–1082 form a helical membrane-spanning segment; the sequence is VSGLNPSLWSIFGLQFILLWL. Residues 1083-1091 are Cytoplasmic-facing; that stretch reads VSGSRHYLW.

It belongs to the calcium channel subunit alpha-2/delta family. As to quaternary structure, dimer formed of alpha-2-1 and delta-1 chains; disulfide-linked. Voltage-dependent calcium channels are multisubunit complexes, consisting of alpha-1 (CACNA1), alpha-2 (CACNA2D), beta (CACNB) and delta (CACNA2D) subunits in a 1:1:1:1 ratio. Proteolytically processed into subunits alpha-2-1 and delta-1 that are disulfide-linked.

The protein localises to the membrane. Its subcellular location is the cell membrane. The alpha-2/delta subunit of voltage-dependent calcium channels regulates calcium current density and activation/inactivation kinetics of the calcium channel. Plays an important role in excitation-contraction coupling. The protein is Voltage-dependent calcium channel subunit alpha-2/delta-1 (Cacna2d1) of Rattus norvegicus (Rat).